We begin with the raw amino-acid sequence, 252 residues long: Ubiquinone biosynthesis O-methyltransferase (252 aa).

Residues arginine 45, glycine 76, aspartate 97, and methionine 141 each coordinate S-adenosyl-L-methionine.

Belongs to the methyltransferase superfamily. UbiG/COQ3 family.

The enzyme catalyses a 3-demethylubiquinol + S-adenosyl-L-methionine = a ubiquinol + S-adenosyl-L-homocysteine + H(+). It catalyses the reaction a 3-(all-trans-polyprenyl)benzene-1,2-diol + S-adenosyl-L-methionine = a 2-methoxy-6-(all-trans-polyprenyl)phenol + S-adenosyl-L-homocysteine + H(+). It participates in cofactor biosynthesis; ubiquinone biosynthesis. O-methyltransferase that catalyzes the 2 O-methylation steps in the ubiquinone biosynthetic pathway. In Caulobacter sp. (strain K31), this protein is Ubiquinone biosynthesis O-methyltransferase.